The primary structure comprises 156 residues: UPF0232 protein BL0636 (156 aa).

Belongs to the UPF0232 family.

This Bifidobacterium longum (strain NCC 2705) protein is UPF0232 protein BL0636.